We begin with the raw amino-acid sequence, 616 residues long: Chaperone protein HscA (616 aa).

It belongs to the heat shock protein 70 family.

Chaperone involved in the maturation of iron-sulfur cluster-containing proteins. Has a low intrinsic ATPase activity which is markedly stimulated by HscB. Involved in the maturation of IscU. This Salmonella newport (strain SL254) protein is Chaperone protein HscA.